A 217-amino-acid chain; its full sequence is uncharacterized protein (217 aa).

This is an uncharacterized protein from Haemophilus influenzae (strain ATCC 51907 / DSM 11121 / KW20 / Rd).